We begin with the raw amino-acid sequence, 1239 residues long: Protein strawberry notch homolog 1 (1239 aa).

The interval 684–837 is disordered; that stretch reads AQSNNNSPRD…SANSNTNSSF (154 aa). Positions 694-713 are enriched in basic and acidic residues; that stretch reads SPCKENKIKKRKGEEVSREA. Positions 728–744 are enriched in acidic residues; sequence DESESESDASDNEESDN. Residues 778-790 show a composition bias toward basic residues; it reads KEHKKVKEKKKKK. Residues 814–837 are compositionally biased toward low complexity; sequence FTSTVGTTTSSTNASANSNTNSSF. The stretch at 838–866 forms a coiled coil; it reads VTSQDAVERAQQMKKELLDKLEKLAEDLP.

The protein belongs to the SBNO family.

It is found in the nucleus. Its function is as follows. Plays a crucial role in the regulation of neural stem cells (NSCs) proliferation. Enhances the phosphorylation of GSK3B through the PI3K-Akt signaling pathway, thereby upregulating the Wnt/beta-catenin signaling pathway and promoting the proliferation of NSCs. This chain is Protein strawberry notch homolog 1 (SBNO1), found in Gallus gallus (Chicken).